A 1557-amino-acid polypeptide reads, in one-letter code: DVA-1 polyprotein (1557 aa).

Positions 1 to 21 (MKSTSFITLLLLSYFIVEAHS) are cleaved as a signal peptide. A propeptide spanning residues 22–60 (SIFHWDDERLFKHDDTHSWLTDVQKAELETLKHQPIQLR) is cleaved from the precursor. Asn997 carries N-linked (GlcNAc...) asparagine glycosylation.

It belongs to the NPA family. In terms of processing, nematode polyprotein allergens (NPAs) are synthesized as large polypeptides that are subsequently proteolytically cleaved to active polypeptide units.

Its function is as follows. Has high binding affinity for fatty acids and retinoids. The protein is DVA-1 polyprotein (DVA-1) of Dictyocaulus viviparus (Bovine lungworm).